A 207-amino-acid polypeptide reads, in one-letter code: Large ribosomal subunit protein uL4 (207 aa).

A disordered region spans residues 49-78 (HAVKNRSAVSGGGRKPWRQKGTGRARQGSI).

Belongs to the universal ribosomal protein uL4 family. As to quaternary structure, part of the 50S ribosomal subunit.

Its function is as follows. One of the primary rRNA binding proteins, this protein initially binds near the 5'-end of the 23S rRNA. It is important during the early stages of 50S assembly. It makes multiple contacts with different domains of the 23S rRNA in the assembled 50S subunit and ribosome. Forms part of the polypeptide exit tunnel. The chain is Large ribosomal subunit protein uL4 from Streptococcus pyogenes serotype M49 (strain NZ131).